The chain runs to 316 residues: GPI-specific phospholipase A2-like PGAP3 (316 aa).

Positions Met1–Gly19 are cleaved as a signal peptide. The Lumenal portion of the chain corresponds to Asp20–Cys97. N-linked (GlcNAc...) asparagine glycosylation is present at Asn36. A helical membrane pass occupies residues Phe98–Leu118. Residues Leu119–Met131 lie on the Cytoplasmic side of the membrane. A helical transmembrane segment spans residues Tyr132 to Phe152. The Lumenal portion of the chain corresponds to His153–Tyr165. The chain crosses the membrane as a helical span at residues Phe166–Leu186. The Cytoplasmic segment spans residues Arg187–Met194. The chain crosses the membrane as a helical span at residues Val195–Phe215. Topologically, residues Asp216–Asn220 are lumenal. The helical transmembrane segment at Met221–Leu241 threads the bilayer. The Cytoplasmic portion of the chain corresponds to Asn242–Met254. A helical membrane pass occupies residues Val255–Trp275. Over Val276–Asp278 the chain is Lumenal. Residues Ala279–Ile299 form a helical membrane-spanning segment. The Cytoplasmic portion of the chain corresponds to Asp300–Asp316.

This sequence belongs to the PGAP3 family.

The protein resides in the golgi apparatus membrane. Involved in the fatty acid remodeling steps of GPI-anchor maturation where the unsaturated acyl chain at sn-2 of inositol phosphate is replaced by a saturated stearoyl chain. May catalyze the first step of the fatty acid remodeling, by removing the unsaturated acyl chain at sn-2 of inositol phosphate, generating a lyso-GPI intermediate. The fatty acid remodeling steps is critical for the integration of GPI-APs into lipid rafts. This Danio rerio (Zebrafish) protein is GPI-specific phospholipase A2-like PGAP3.